The sequence spans 441 residues: Ribulose bisphosphate carboxylase large chain (441 aa).

The substrate site is built by asparagine 89 and threonine 139. Lysine 141 acts as the Proton acceptor in catalysis. A substrate-binding site is contributed by lysine 143. Mg(2+)-binding residues include lysine 167, aspartate 169, and glutamate 170. Lysine 167 carries the post-translational modification N6-carboxylysine. The active-site Proton acceptor is histidine 260. Residues arginine 261, histidine 293, and serine 345 each coordinate substrate.

Belongs to the RuBisCO large chain family. Type I subfamily. As to quaternary structure, heterohexadecamer of 8 large chains and 8 small chains; disulfide-linked. The disulfide link is formed within the large subunit homodimers. Mg(2+) is required as a cofactor. In terms of processing, the disulfide bond which can form in the large chain dimeric partners within the hexadecamer appears to be associated with oxidative stress and protein turnover.

It is found in the plastid. The protein localises to the chloroplast. It catalyses the reaction 2 (2R)-3-phosphoglycerate + 2 H(+) = D-ribulose 1,5-bisphosphate + CO2 + H2O. The catalysed reaction is D-ribulose 1,5-bisphosphate + O2 = 2-phosphoglycolate + (2R)-3-phosphoglycerate + 2 H(+). In terms of biological role, ruBisCO catalyzes two reactions: the carboxylation of D-ribulose 1,5-bisphosphate, the primary event in carbon dioxide fixation, as well as the oxidative fragmentation of the pentose substrate in the photorespiration process. Both reactions occur simultaneously and in competition at the same active site. The protein is Ribulose bisphosphate carboxylase large chain of Symphoricarpos albus (Common snowberry).